The sequence spans 177 residues: GTP-dependent dephospho-CoA kinase (177 aa).

9 residues coordinate GTP: Gly-25, Tyr-31, Asp-48, Val-49, Val-50, Asp-67, Lys-69, Glu-124, and Asp-147.

This sequence belongs to the GTP-dependent DPCK family. In terms of assembly, monomer in solution.

It carries out the reaction 3'-dephospho-CoA + GTP = GDP + CoA + H(+). It participates in cofactor biosynthesis; coenzyme A biosynthesis. In terms of biological role, catalyzes the GTP-dependent phosphorylation of the 3'-hydroxyl group of dephosphocoenzyme A to form coenzyme A (CoA). Can also use UTP, with lower efficiency and has weak activity with ATP, but shows a strong preference for GTP as the phosphate donor. This chain is GTP-dependent dephospho-CoA kinase, found in Thermococcus kodakarensis (strain ATCC BAA-918 / JCM 12380 / KOD1) (Pyrococcus kodakaraensis (strain KOD1)).